We begin with the raw amino-acid sequence, 399 residues long: uncharacterized protein (399 aa).

The protein belongs to the AdoMet synthetase 2 family.

This is an uncharacterized protein from Streptococcus pyogenes serotype M1.